Reading from the N-terminus, the 885-residue chain is Alanine--tRNA ligase (885 aa).

Positions 574, 578, 685, and 689 each coordinate Zn(2+).

This sequence belongs to the class-II aminoacyl-tRNA synthetase family. Requires Zn(2+) as cofactor.

The protein localises to the cytoplasm. The catalysed reaction is tRNA(Ala) + L-alanine + ATP = L-alanyl-tRNA(Ala) + AMP + diphosphate. Its function is as follows. Catalyzes the attachment of alanine to tRNA(Ala) in a two-step reaction: alanine is first activated by ATP to form Ala-AMP and then transferred to the acceptor end of tRNA(Ala). Also edits incorrectly charged Ser-tRNA(Ala) and Gly-tRNA(Ala) via its editing domain. The protein is Alanine--tRNA ligase of Deinococcus geothermalis (strain DSM 11300 / CIP 105573 / AG-3a).